A 213-amino-acid polypeptide reads, in one-letter code: Thymidylate kinase (213 aa).

Glycine 11–threonine 18 is a binding site for ATP.

Belongs to the thymidylate kinase family.

The catalysed reaction is dTMP + ATP = dTDP + ADP. In terms of biological role, phosphorylation of dTMP to form dTDP in both de novo and salvage pathways of dTTP synthesis. In Oenococcus oeni (strain ATCC BAA-331 / PSU-1), this protein is Thymidylate kinase.